The sequence spans 869 residues: Structure-specific endonuclease subunit SLX4 (869 aa).

Residues 40–59 (SPLSLPSPTSLLDFLSTSTS) show a composition bias toward low complexity. Disordered stretches follow at residues 40 to 79 (SPLS…EVLD), 92 to 116 (NRVV…ESPG), 165 to 199 (KANQ…INDL), 293 to 323 (GLSD…NPPK), 351 to 388 (TLLS…KKNE), 418 to 437 (ANGH…HISN), and 630 to 774 (KTSN…ASET). Basic and acidic residues predominate over residues 63–79 (ARSDTDGDKTQGKEVLD). Composition is skewed to polar residues over residues 165–174 (KANQTVSLQP) and 294–311 (LSDS…SATS). Residues 312-322 (KPRRVKAKNPP) show a composition bias toward basic residues. Composition is skewed to polar residues over residues 647–657 (VDESTQGQSLG) and 664–673 (SIPQTATTQV). The span at 688 to 700 (VPVPSRRSTSTSK) shows a compositional bias: low complexity. The span at 765–774 (IPSTGTASET) shows a compositional bias: polar residues.

It belongs to the SLX4 family. Forms a heterodimer with SLX1. Phosphorylated in response to DNA damage.

It localises to the nucleus. Regulatory subunit of the SLX1-SLX4 structure-specific endonuclease that resolves DNA secondary structures generated during DNA repair and recombination. Has endonuclease activity towards branched DNA substrates, introducing single-strand cuts in duplex DNA close to junctions with ss-DNA. This Paracoccidioides brasiliensis (strain Pb18) protein is Structure-specific endonuclease subunit SLX4.